A 345-amino-acid chain; its full sequence is UDP-3-O-acylglucosamine N-acyltransferase (345 aa).

Histidine 253 serves as the catalytic Proton acceptor.

Belongs to the transferase hexapeptide repeat family. LpxD subfamily. As to quaternary structure, homotrimer.

The catalysed reaction is a UDP-3-O-[(3R)-3-hydroxyacyl]-alpha-D-glucosamine + a (3R)-hydroxyacyl-[ACP] = a UDP-2-N,3-O-bis[(3R)-3-hydroxyacyl]-alpha-D-glucosamine + holo-[ACP] + H(+). It functions in the pathway bacterial outer membrane biogenesis; LPS lipid A biosynthesis. Its function is as follows. Catalyzes the N-acylation of UDP-3-O-acylglucosamine using 3-hydroxyacyl-ACP as the acyl donor. Is involved in the biosynthesis of lipid A, a phosphorylated glycolipid that anchors the lipopolysaccharide to the outer membrane of the cell. In Rickettsia massiliae (strain Mtu5), this protein is UDP-3-O-acylglucosamine N-acyltransferase.